The sequence spans 182 residues: Nudix hydrolase 17, mitochondrial (182 aa).

The transit peptide at 1-26 directs the protein to the mitochondrion; the sequence is MGVEKMVCLASRTGRQFQRYNKGRRQ. The region spanning 27 to 158 is the Nudix hydrolase domain; it reads VVGCVPYRFK…WMKEALDVLV (132 aa). Positions 65–86 match the Nudix box motif; the sequence is GGWELDESVEEAASRECLEEAG. Mg(2+)-binding residues include Glu-80 and Glu-84.

Belongs to the Nudix hydrolase family. It depends on Mg(2+) as a cofactor. Requires Mn(2+) as cofactor. As to expression, expressed in roots, leaves, stems and inflorescences.

The protein resides in the mitochondrion. Functionally, probably mediates the hydrolysis of some nucleoside diphosphate derivatives. The chain is Nudix hydrolase 17, mitochondrial (NUDT17) from Arabidopsis thaliana (Mouse-ear cress).